The primary structure comprises 175 residues: ATP synthase subunit delta (175 aa).

It belongs to the ATPase delta chain family. In terms of assembly, F-type ATPases have 2 components, F(1) - the catalytic core - and F(0) - the membrane proton channel. F(1) has five subunits: alpha(3), beta(3), gamma(1), delta(1), epsilon(1). F(0) has three main subunits: a(1), b(2) and c(10-14). The alpha and beta chains form an alternating ring which encloses part of the gamma chain. F(1) is attached to F(0) by a central stalk formed by the gamma and epsilon chains, while a peripheral stalk is formed by the delta and b chains.

The protein resides in the cell inner membrane. In terms of biological role, f(1)F(0) ATP synthase produces ATP from ADP in the presence of a proton or sodium gradient. F-type ATPases consist of two structural domains, F(1) containing the extramembraneous catalytic core and F(0) containing the membrane proton channel, linked together by a central stalk and a peripheral stalk. During catalysis, ATP synthesis in the catalytic domain of F(1) is coupled via a rotary mechanism of the central stalk subunits to proton translocation. Functionally, this protein is part of the stalk that links CF(0) to CF(1). It either transmits conformational changes from CF(0) to CF(1) or is implicated in proton conduction. The protein is ATP synthase subunit delta of Xanthomonas axonopodis pv. citri (strain 306).